Consider the following 651-residue polypeptide: Acetyl-coenzyme A synthetase (651 aa).

Residues 193–196 (RAGR), T313, and N337 each bind CoA. ATP-binding positions include 389 to 391 (GEP), 413 to 418 (DTWWQT), D502, and R517. Residue S525 coordinates CoA. R528 is a binding site for ATP. Mg(2+) is bound by residues V539, H541, and V544. R586 contacts CoA. K611 bears the N6-acetyllysine mark.

Belongs to the ATP-dependent AMP-binding enzyme family. Mg(2+) serves as cofactor. In terms of processing, acetylated. Deacetylation by the SIR2-homolog deacetylase activates the enzyme.

It catalyses the reaction acetate + ATP + CoA = acetyl-CoA + AMP + diphosphate. Its function is as follows. Catalyzes the conversion of acetate into acetyl-CoA (AcCoA), an essential intermediate at the junction of anabolic and catabolic pathways. AcsA undergoes a two-step reaction. In the first half reaction, AcsA combines acetate with ATP to form acetyl-adenylate (AcAMP) intermediate. In the second half reaction, it can then transfer the acetyl group from AcAMP to the sulfhydryl group of CoA, forming the product AcCoA. The protein is Acetyl-coenzyme A synthetase of Shewanella denitrificans (strain OS217 / ATCC BAA-1090 / DSM 15013).